A 103-amino-acid polypeptide reads, in one-letter code: Large ribosomal subunit protein eL30 (103 aa).

It belongs to the eukaryotic ribosomal protein eL30 family.

In Methanothrix thermoacetophila (strain DSM 6194 / JCM 14653 / NBRC 101360 / PT) (Methanosaeta thermophila), this protein is Large ribosomal subunit protein eL30.